We begin with the raw amino-acid sequence, 406 residues long: Methyltransferase cfoD (406 aa).

S-adenosyl-L-methionine contacts are provided by Asp-270 and Arg-312. Catalysis depends on His-315, which acts as the Proton acceptor.

This sequence belongs to the class I-like SAM-binding methyltransferase superfamily. Cation-independent O-methyltransferase family.

It functions in the pathway secondary metabolite biosynthesis; flavonoid biosynthesis. Functionally, methyltransferase; part of the gene cluster that mediates the biosynthesis of chlorflavonin, a fungal flavonoid with acetolactate synthase inhibitory activity. Within the pathway, cfoD is responsible for the methylation at position C3-OH of flavonoid. The pathway begins with the PKS-NRPS hybrid synthetase cfoA that uses benzoic acid or p-hydroxybenzoic acid as a starter unit with four rounds of chain elongation using malonyl-CoA to form the chalcone skeleton. Then, a new type of chalcone isomerase, cfoK, catalyzes the conversion of the chalcone into a flavanone by a histidine-mediated oxa-Michael addition mechanism. The desaturation of flavanone to flavone is catalyzed by a new type of flavone synthase, the flavin mononucleotide (FMN)-dependent oxidoreductase cfoJ. Monooxygenases cfoF, cfoG, and P450 cfoH are responsible for the hydroxylation of the flavonoid skeleton at sites C3, C8, and C2', respectively. Like cfoF, the dehydratase cfoI also plays a role in the hydroxylation of position C3. Methyltransferases cfoB, cfoC, and cfoD then catalyze the methylation of C7-OH, C8-OH, and C3-OH, respectively. Finally, the monooxygenase cfoE is responsible for the chlorination of flavonoid at position C3'. This chain is Methyltransferase cfoD, found in Aspergillus candidus.